The chain runs to 646 residues: Epithelial sodium channel subunit beta-2 (646 aa).

Residues 1 to 57 (MIQGKLKRLKRYFTRALHRIQKGPGYTYKELLVWFCDNTNTHGPKRIIKEGPKKRVM) are Cytoplasmic-facing. Residues 58-78 (WFILTLVFAGLVFWQWGLLIL) form a helical membrane-spanning segment. Residues 79-551 (TYLSYGVSVS…GGQFGFWMGG (473 aa)) are Extracellular-facing. 8 disulfide bridges follow: Cys104–Cys290, Cys214–Cys221, Cys267–Cys274, Cys380–Cys467, Cys405–Cys463, Cys409–Cys459, Cys418–Cys445, and Cys420–Cys434. A helical membrane pass occupies residues 552-572 (SVLCIIEFGEIIIDCMWITIL). The Cytoplasmic segment spans residues 573 to 646 (KLLAWIRNRR…IEPVSSDEEN (74 aa)). Positions 586 to 646 (QRPQYADPPP…IEPVSSDEEN (61 aa)) are disordered. The span at 610–619 (QHDDGNHVTE) shows a compositional bias: basic and acidic residues.

Belongs to the amiloride-sensitive sodium channel (TC 1.A.6) family. SCNN1B subfamily. As to quaternary structure, component of the heterotrimeric epithelial sodium channel (ENaC) composed of an alpha/SCNN1A, a beta/SCNN1B and a gamma/SCNN1G subunit.

It is found in the apical cell membrane. Its subcellular location is the cytoplasmic vesicle membrane. The enzyme catalyses Na(+)(in) = Na(+)(out). Originally identified and characterized by its inhibition by the diuretic drug amiloride. This is one of the three pore-forming subunits of the heterotrimeric epithelial sodium channel (ENaC), a critical regulator of sodium balance and fluid homeostasis. ENaC operates in epithelial tissues, where it mediates the electrodiffusion of sodium ions from extracellular fluid through the apical membrane of cells, with water following osmotically. This is Epithelial sodium channel subunit beta-2 (scnn1b-b) from Xenopus laevis (African clawed frog).